The following is a 201-amino-acid chain: Ciliary microtubule inner protein 2C (201 aa).

Belongs to the CIMIP2 family. Microtubule inner protein component of sperm flagellar doublet microtubules. Expressed in airway epithelial cells.

The protein localises to the cytoplasm. It localises to the cytoskeleton. The protein resides in the cilium axoneme. It is found in the flagellum axoneme. Functionally, microtubule inner protein (MIP) part of the dynein-decorated doublet microtubules (DMTs) in cilia axoneme, which is required for motile cilia beating. Binds to the intra-tubulin interfaces. This Homo sapiens (Human) protein is Ciliary microtubule inner protein 2C.